Here is a 257-residue protein sequence, read N- to C-terminus: NAD-capped RNA hydrolase NudC (257 aa).

Arg-69 contacts substrate. Positions 98 and 101 each coordinate Zn(2+). Residue Glu-111 coordinates substrate. 2 residues coordinate Zn(2+): Cys-116 and Cys-119. Residue Tyr-124 participates in substrate binding. Positions 125–248 (PQIAPCIIVA…TVARRLIEDT (124 aa)) constitute a Nudix hydrolase domain. A divalent metal cation-binding residues include Ala-158, Glu-174, and Glu-178. The Nudix box motif lies at 159-180 (GFVEVGETLEQAVAREVMEESG). 192-199 (QPWPFPQS) lines the substrate pocket. Glu-219 serves as a coordination point for a divalent metal cation. Ala-241 lines the substrate pocket.

The protein belongs to the Nudix hydrolase family. NudC subfamily. Homodimer. Requires Mg(2+) as cofactor. Mn(2+) serves as cofactor. It depends on Zn(2+) as a cofactor.

The catalysed reaction is a 5'-end NAD(+)-phospho-ribonucleoside in mRNA + H2O = a 5'-end phospho-adenosine-phospho-ribonucleoside in mRNA + beta-nicotinamide D-ribonucleotide + 2 H(+). It carries out the reaction NAD(+) + H2O = beta-nicotinamide D-ribonucleotide + AMP + 2 H(+). The enzyme catalyses NADH + H2O = reduced beta-nicotinamide D-ribonucleotide + AMP + 2 H(+). In terms of biological role, mRNA decapping enzyme that specifically removes the nicotinamide adenine dinucleotide (NAD) cap from a subset of mRNAs by hydrolyzing the diphosphate linkage to produce nicotinamide mononucleotide (NMN) and 5' monophosphate mRNA. The NAD-cap is present at the 5'-end of some mRNAs and stabilizes RNA against 5'-processing. Has preference for mRNAs with a 5'-end purine. Catalyzes the hydrolysis of a broad range of dinucleotide pyrophosphates. In Salmonella schwarzengrund (strain CVM19633), this protein is NAD-capped RNA hydrolase NudC.